The primary structure comprises 662 residues: MQLDEDLEFAKKIFNPNRAFAKQARIKNMCEYKDLVHEANEDYEHFWGELAKQKLTWFKPFDKVLNSDNAPFFKWFENGKINVSYNCIDRHLKDKKNKVAIIFEGEMGDYNVITYRKLHSEVNKTANLLKNEFNVKKGDRVIIYMPMIVESVYMMLACARIGAIHSIVFAGFSPEALRDRINDAQAKLVITADGTFRKGKPYMLKPALDKALENNACPSVEKALIVIRNAREIDYVRGRDFVYNEMVNYQSDKCEPEMMDSEDPLFLLYTSGSTGKPKGVQHSSAGYLLWAQMTMEWVFDIRDNDNFWCTADIGWITGHTYVVYGPLACGATTLILEGTMSYPDYGRWWRMIEEYRVDKFYTSPTAIRMLHAKGENEPLKYNLESLKVLGTVGEPINPTAWKWFYEKIGNSKCSIVDTWWQTETGGHIISPLPGATPIRASCATLPLPGIHAEVLNEDGTKTKPGEQGFLCITKPWPSMVRNIWGDEKRYIDSYFSQIKLNGEYVYLSGDGAIVDENGYITIIGRTDDIVNVSGHRIGTAEVESAISKHEMVVECAVVGIPDTIKGEGLFAFVVLCDGAKCNLGESLELLKEMNHILSVEIGKIAKLDNVMYVPGLPKTRSGKIMRRLLKSIAKKEPITQDLSTLEDVNVVKEIMSIVQMEE.

Residues 197 to 200 (RKGK) and Thr-317 contribute to the CoA site. Residues 393–395 (GEP), 417–422 (DTWWQT), Asp-510, and Arg-525 each bind ATP. Ser-533 lines the CoA pocket. An ATP-binding site is contributed by Arg-536. The Mg(2+) site is built by His-549 and Val-552. Lys-623 is modified (N6-acetyllysine).

The protein belongs to the ATP-dependent AMP-binding enzyme family. Mg(2+) serves as cofactor. Acetylated. Deacetylation by the SIR2-homolog deacetylase activates the enzyme.

It carries out the reaction acetate + ATP + CoA = acetyl-CoA + AMP + diphosphate. Its function is as follows. Catalyzes the conversion of acetate into acetyl-CoA (AcCoA), an essential intermediate at the junction of anabolic and catabolic pathways. AcsA undergoes a two-step reaction. In the first half reaction, AcsA combines acetate with ATP to form acetyl-adenylate (AcAMP) intermediate. In the second half reaction, it can then transfer the acetyl group from AcAMP to the sulfhydryl group of CoA, forming the product AcCoA. This chain is Acetyl-coenzyme A synthetase, found in Helicobacter pylori (strain P12).